The following is a 362-amino-acid chain: Chorismate synthase (362 aa).

Position 46 (arginine 46) interacts with NADP(+). FMN is bound by residues arginine 122 to serine 124, asparagine 238 to alanine 239, glycine 278, lysine 293 to serine 297, and arginine 319.

Belongs to the chorismate synthase family. As to quaternary structure, homotetramer. The cofactor is FMNH2.

The enzyme catalyses 5-O-(1-carboxyvinyl)-3-phosphoshikimate = chorismate + phosphate. The protein operates within metabolic intermediate biosynthesis; chorismate biosynthesis; chorismate from D-erythrose 4-phosphate and phosphoenolpyruvate: step 7/7. In terms of biological role, catalyzes the anti-1,4-elimination of the C-3 phosphate and the C-6 proR hydrogen from 5-enolpyruvylshikimate-3-phosphate (EPSP) to yield chorismate, which is the branch point compound that serves as the starting substrate for the three terminal pathways of aromatic amino acid biosynthesis. This reaction introduces a second double bond into the aromatic ring system. This chain is Chorismate synthase, found in Campylobacter jejuni subsp. doylei (strain ATCC BAA-1458 / RM4099 / 269.97).